Reading from the N-terminus, the 409-residue chain is MARAKFERTKPHANIGTIGHVDHGKTTLTAAITTVLAKAGMAKARAYADIDAAPEEKARGITINTAHVEYETGNRHYAHVDCPGHADYVKNMITGAAQMDGAILVVSAADGPMPQTREHILLAKQVGVPNIVVFLNKEDMVDDAELLELVELEVRELLSSYDFPGDDIPIVAGSALQALEAIQGGASGQKGDNPWVDKILKLMEEVDAYIPTPEREVDRPFLMAVEDVFTITGRGTVATGRIERGSVKVGETIEIVGLRDTRSTTVTGVEMFQKTLDEGLAGDNVGLLLRGIQKTDIERGMVLAKPGSITPHTKFESEVYVLKKEEGGRHTPFFPGYRPQFYVRTTDVTGAISDFTADDGSAAEMVIPGDRIKMTVELINPIAIEQGMRFAIREGGRTIGAGVVSKILQ.

The tr-type G domain occupies 10–214 (KPHANIGTIG…EVDAYIPTPE (205 aa)). A G1 region spans residues 19–26 (GHVDHGKT). 19–26 (GHVDHGKT) serves as a coordination point for GTP. Mg(2+) is bound at residue T26. The interval 60–64 (GITIN) is G2. Residues 81–84 (DCPG) are G3. Residues 81–85 (DCPGH) and 136–139 (NKED) each bind GTP. The tract at residues 136–139 (NKED) is G4. Positions 174–176 (SAL) are G5.

It belongs to the TRAFAC class translation factor GTPase superfamily. Classic translation factor GTPase family. EF-Tu/EF-1A subfamily. In terms of assembly, monomer.

The protein localises to the cytoplasm. The catalysed reaction is GTP + H2O = GDP + phosphate + H(+). In terms of biological role, GTP hydrolase that promotes the GTP-dependent binding of aminoacyl-tRNA to the A-site of ribosomes during protein biosynthesis. The chain is Elongation factor Tu from Synechococcus elongatus (strain ATCC 33912 / PCC 7942 / FACHB-805) (Anacystis nidulans R2).